Consider the following 117-residue polypeptide: Immunoglobulin heavy variable 4-28 (117 aa).

Residues 1-19 form the signal peptide; the sequence is MKHLWFFLLLVAAPRWVLS. The interval 20 to 44 is framework-1; that stretch reads QVQLQESGPGLVKPSDTLSLTCAVS. Positions 20-117 constitute an Ig-like domain; that stretch reads QVQLQESGPG…VDTAVYYCAR (98 aa). Cysteine 41 and cysteine 115 are joined by a disulfide. Residues 45 to 53 form a complementarity-determining-1 region; that stretch reads GYSISSSNW. The interval 54–70 is framework-2; that stretch reads WGWIRQPPGKGLEWIGY. The interval 71–77 is complementarity-determining-2; sequence IYYSGST. The interval 78 to 115 is framework-3; sequence YYNPSLKSRVTMSVDTSKNQFSLKLSSVTAVDTAVYYC. The interval 116 to 117 is complementarity-determining-3; sequence AR.

As to quaternary structure, immunoglobulins are composed of two identical heavy chains and two identical light chains; disulfide-linked.

Its subcellular location is the secreted. The protein localises to the cell membrane. In terms of biological role, v region of the variable domain of immunoglobulin heavy chains that participates in the antigen recognition. Immunoglobulins, also known as antibodies, are membrane-bound or secreted glycoproteins produced by B lymphocytes. In the recognition phase of humoral immunity, the membrane-bound immunoglobulins serve as receptors which, upon binding of a specific antigen, trigger the clonal expansion and differentiation of B lymphocytes into immunoglobulins-secreting plasma cells. Secreted immunoglobulins mediate the effector phase of humoral immunity, which results in the elimination of bound antigens. The antigen binding site is formed by the variable domain of one heavy chain, together with that of its associated light chain. Thus, each immunoglobulin has two antigen binding sites with remarkable affinity for a particular antigen. The variable domains are assembled by a process called V-(D)-J rearrangement and can then be subjected to somatic hypermutations which, after exposure to antigen and selection, allow affinity maturation for a particular antigen. This Homo sapiens (Human) protein is Immunoglobulin heavy variable 4-28.